The following is a 143-amino-acid chain: Transcriptional regulator MraZ (143 aa).

SpoVT-AbrB domains are found at residues 5-47 (TYTP…PREE) and 76-119 (TDEQ…DAQA).

This sequence belongs to the MraZ family. Forms oligomers.

It is found in the cytoplasm. The protein localises to the nucleoid. This is Transcriptional regulator MraZ from Rhodococcus opacus (strain B4).